The chain runs to 488 residues: Argininosuccinate lyase (488 aa).

Belongs to the lyase 1 family. Argininosuccinate lyase subfamily.

Its subcellular location is the cytoplasm. It catalyses the reaction 2-(N(omega)-L-arginino)succinate = fumarate + L-arginine. It functions in the pathway amino-acid biosynthesis; L-arginine biosynthesis; L-arginine from L-ornithine and carbamoyl phosphate: step 3/3. This is Argininosuccinate lyase from Corynebacterium jeikeium (strain K411).